The sequence spans 535 residues: Sodium channel protein Nach (535 aa).

The Cytoplasmic portion of the chain corresponds to 1 to 49 (MGHQEELKPEQVDLKVTPFVGYLRRTWSDFCATSSIHGLKYTRDEDTNK). A helical membrane pass occupies residues 50-70 (IVHLVWLLISVVMFICAVVMA). Over 71–471 (RTFYMDYRSS…LVSNLGSAFS (401 aa)) the chain is Extracellular. 3 N-linked (GlcNAc...) asparagine glycosylation sites follow: asparagine 165, asparagine 239, and asparagine 367. Residues 472-492 (LFVGMSMLSVVEIIYYFSVIL) form a helical membrane-spanning segment. The Cytoplasmic portion of the chain corresponds to 493-535 (RKNYKLECETRSQMLHKKPKFAWPKANDTHSKEQKSVFIIHKS).

It belongs to the amiloride-sensitive sodium channel (TC 1.A.6) family. As to expression, embryonic and larval tracheal system; dorsal trunk (but not at fusion with transverse connective), several branches and terminal cells. Also expressed in adult tracheal system; dorsal trunk, but not at the spiracles.

It localises to the membrane. Functionally, part of a complex that plays a role in tracheal liquid clearance. Probable role in sodium transport. The sequence is that of Sodium channel protein Nach (Nach) from Drosophila melanogaster (Fruit fly).